Reading from the N-terminus, the 303-residue chain is Protein-lysine N-methyltransferase rrg1 (303 aa).

Residues Trp-117, 143–145, Asp-165, Trp-198, and Ser-221 each bind S-adenosyl-L-methionine; that span reads GAG.

Belongs to the class I-like SAM-binding methyltransferase superfamily. METTL21 family.

It localises to the cytoplasm. The protein localises to the nucleus. Its function is as follows. S-adenosyl-L-methionine-dependent protein-lysine N-methyltransferase that methylates elongation factor 2 and elongation factor 3A. The protein is Protein-lysine N-methyltransferase rrg1 of Schizosaccharomyces pombe (strain 972 / ATCC 24843) (Fission yeast).